The primary structure comprises 554 residues: CTP synthase (554 aa).

An amidoligase domain region spans residues 1 to 270; the sequence is MTKFVFVTGG…DRIICEELRI (270 aa). Position 13 (serine 13) interacts with CTP. Serine 13 contacts UTP. ATP is bound by residues 14–19 and aspartate 71; that span reads SLGKGI. 2 residues coordinate Mg(2+): aspartate 71 and glutamate 144. Residues 151-153, 191-196, and lysine 227 each bind CTP; these read DIE and KTKPTQ. UTP-binding positions include 191–196 and lysine 227; that span reads KTKPTQ. The 253-residue stretch at 295–547 folds into the Glutamine amidotransferase type-1 domain; that stretch reads TIGMVGKYVD…VEAALAHRQR (253 aa). Position 356 (glycine 356) interacts with L-glutamine. Cysteine 383 acts as the Nucleophile; for glutamine hydrolysis in catalysis. Residues 384 to 387, glutamate 407, and arginine 473 each bind L-glutamine; that span reads LGMQ. Active-site residues include histidine 520 and glutamate 522.

It belongs to the CTP synthase family. In terms of assembly, homotetramer.

The enzyme catalyses UTP + L-glutamine + ATP + H2O = CTP + L-glutamate + ADP + phosphate + 2 H(+). The catalysed reaction is L-glutamine + H2O = L-glutamate + NH4(+). It catalyses the reaction UTP + NH4(+) + ATP = CTP + ADP + phosphate + 2 H(+). The protein operates within pyrimidine metabolism; CTP biosynthesis via de novo pathway; CTP from UDP: step 2/2. Its activity is regulated as follows. Allosterically activated by GTP, when glutamine is the substrate; GTP has no effect on the reaction when ammonia is the substrate. The allosteric effector GTP functions by stabilizing the protein conformation that binds the tetrahedral intermediate(s) formed during glutamine hydrolysis. Inhibited by the product CTP, via allosteric rather than competitive inhibition. Its function is as follows. Catalyzes the ATP-dependent amination of UTP to CTP with either L-glutamine or ammonia as the source of nitrogen. Regulates intracellular CTP levels through interactions with the four ribonucleotide triphosphates. The protein is CTP synthase of Ralstonia nicotianae (strain ATCC BAA-1114 / GMI1000) (Ralstonia solanacearum).